The chain runs to 193 residues: Probable nicotinate-nucleotide adenylyltransferase (193 aa).

The protein belongs to the NadD family.

It carries out the reaction nicotinate beta-D-ribonucleotide + ATP + H(+) = deamido-NAD(+) + diphosphate. It functions in the pathway cofactor biosynthesis; NAD(+) biosynthesis; deamido-NAD(+) from nicotinate D-ribonucleotide: step 1/1. Catalyzes the reversible adenylation of nicotinate mononucleotide (NaMN) to nicotinic acid adenine dinucleotide (NaAD). The protein is Probable nicotinate-nucleotide adenylyltransferase of Chlorobium phaeovibrioides (strain DSM 265 / 1930) (Prosthecochloris vibrioformis (strain DSM 265)).